The following is an 87-amino-acid chain: UPF0367 protein Syncc9902_0316 (87 aa).

Belongs to the UPF0367 family.

This Synechococcus sp. (strain CC9902) protein is UPF0367 protein Syncc9902_0316.